Here is a 436-residue protein sequence, read N- to C-terminus: Phosphomethylpyrimidine synthase (436 aa).

Residues N69, M98, Y127, H163, 185–187 (SRG), 226–229 (DACR), and E265 each bind substrate. Zn(2+) is bound at residue H269. Y292 is a substrate binding site. H333 contributes to the Zn(2+) binding site. The [4Fe-4S] cluster site is built by C409, C412, and C416.

This sequence belongs to the ThiC family. Requires [4Fe-4S] cluster as cofactor.

The enzyme catalyses 5-amino-1-(5-phospho-beta-D-ribosyl)imidazole + S-adenosyl-L-methionine = 4-amino-2-methyl-5-(phosphooxymethyl)pyrimidine + CO + 5'-deoxyadenosine + formate + L-methionine + 3 H(+). Its pathway is cofactor biosynthesis; thiamine diphosphate biosynthesis. Catalyzes the synthesis of the hydroxymethylpyrimidine phosphate (HMP-P) moiety of thiamine from aminoimidazole ribotide (AIR) in a radical S-adenosyl-L-methionine (SAM)-dependent reaction. This Clostridium perfringens (strain SM101 / Type A) protein is Phosphomethylpyrimidine synthase.